A 435-amino-acid chain; its full sequence is Methylenetetrahydrofolate--tRNA-(uracil-5-)-methyltransferase TrmFO (435 aa).

10–15 (GAGLAG) provides a ligand contact to FAD.

The protein belongs to the MnmG family. TrmFO subfamily. The cofactor is FAD.

It localises to the cytoplasm. It carries out the reaction uridine(54) in tRNA + (6R)-5,10-methylene-5,6,7,8-tetrahydrofolate + NADH + H(+) = 5-methyluridine(54) in tRNA + (6S)-5,6,7,8-tetrahydrofolate + NAD(+). It catalyses the reaction uridine(54) in tRNA + (6R)-5,10-methylene-5,6,7,8-tetrahydrofolate + NADPH + H(+) = 5-methyluridine(54) in tRNA + (6S)-5,6,7,8-tetrahydrofolate + NADP(+). Functionally, catalyzes the folate-dependent formation of 5-methyl-uridine at position 54 (M-5-U54) in all tRNAs. This Geotalea uraniireducens (strain Rf4) (Geobacter uraniireducens) protein is Methylenetetrahydrofolate--tRNA-(uracil-5-)-methyltransferase TrmFO.